Consider the following 466-residue polypeptide: 3-isopropylmalate dehydratase large subunit (466 aa).

Residues cysteine 347, cysteine 407, and cysteine 410 each coordinate [4Fe-4S] cluster.

Belongs to the aconitase/IPM isomerase family. LeuC type 1 subfamily. As to quaternary structure, heterodimer of LeuC and LeuD. [4Fe-4S] cluster serves as cofactor.

It carries out the reaction (2R,3S)-3-isopropylmalate = (2S)-2-isopropylmalate. It participates in amino-acid biosynthesis; L-leucine biosynthesis; L-leucine from 3-methyl-2-oxobutanoate: step 2/4. In terms of biological role, catalyzes the isomerization between 2-isopropylmalate and 3-isopropylmalate, via the formation of 2-isopropylmaleate. The polypeptide is 3-isopropylmalate dehydratase large subunit (Shigella flexneri).